Consider the following 43-residue polypeptide: Protein PsbN (43 aa).

A helical transmembrane segment spans residues 7–27 (VAIFISGLLVSFTGYALYTAF).

Belongs to the PsbN family.

The protein resides in the plastid. Its subcellular location is the chloroplast thylakoid membrane. Its function is as follows. May play a role in photosystem I and II biogenesis. This is Protein PsbN from Sagittaria latifolia (Broadleaf arrowhead).